A 264-amino-acid chain; its full sequence is Endochitinase At2g43590 (264 aa).

The N-terminal stretch at 1-24 is a signal peptide; that stretch reads MAFTKISLVLLLCLLGFFSETVKS. Positions 25 to 59 constitute a Chitin-binding type-1 domain; sequence QNCGCAPNLCCSQFGYCGTDDAYCGVGCRSGPCRG. 4 cysteine pairs are disulfide-bonded: Cys-27/Cys-35, Cys-29/Cys-41, Cys-34/Cys-48, and Cys-52/Cys-57. The interval 66-264 is catalytic; the sequence is GSVGSIVTQG…GVDPGPNLSC (199 aa). Catalysis depends on Glu-128, which acts as the Proton donor. Residue Asn-261 is glycosylated (N-linked (GlcNAc...) asparagine).

This sequence belongs to the glycosyl hydrolase 19 family. Chitinase class I subfamily.

The enzyme catalyses Random endo-hydrolysis of N-acetyl-beta-D-glucosaminide (1-&gt;4)-beta-linkages in chitin and chitodextrins.. This chain is Endochitinase At2g43590, found in Arabidopsis thaliana (Mouse-ear cress).